Here is a 92-residue protein sequence, read N- to C-terminus: Probable Fe(2+)-trafficking protein (92 aa).

Belongs to the Fe(2+)-trafficking protein family.

Its function is as follows. Could be a mediator in iron transactions between iron acquisition and iron-requiring processes, such as synthesis and/or repair of Fe-S clusters in biosynthetic enzymes. This is Probable Fe(2+)-trafficking protein from Shewanella frigidimarina (strain NCIMB 400).